Consider the following 315-residue polypeptide: DNA-directed RNA polymerase subunit alpha (315 aa).

Residues 1–228 (MIEIEKPKVD…EHLNLFIDLT (228 aa)) are alpha N-terminal domain (alpha-NTD). The segment at 245–315 (KEKVLEMTIE…LGLGLKPSEE (71 aa)) is alpha C-terminal domain (alpha-CTD).

The protein belongs to the RNA polymerase alpha chain family. As to quaternary structure, homodimer. The RNAP catalytic core consists of 2 alpha, 1 beta, 1 beta' and 1 omega subunit. When a sigma factor is associated with the core the holoenzyme is formed, which can initiate transcription.

It catalyses the reaction RNA(n) + a ribonucleoside 5'-triphosphate = RNA(n+1) + diphosphate. Its function is as follows. DNA-dependent RNA polymerase catalyzes the transcription of DNA into RNA using the four ribonucleoside triphosphates as substrates. The sequence is that of DNA-directed RNA polymerase subunit alpha from Clostridioides difficile (strain 630) (Peptoclostridium difficile).